Here is a 149-residue protein sequence, read N- to C-terminus: Large ribosomal subunit protein bL9 (149 aa).

This sequence belongs to the bacterial ribosomal protein bL9 family.

In terms of biological role, binds to the 23S rRNA. This chain is Large ribosomal subunit protein bL9, found in Legionella pneumophila (strain Lens).